Here is a 280-residue protein sequence, read N- to C-terminus: Octanoyltransferase LIP2p2, chloroplastic (280 aa).

Residues 1–34 (MVFSVATSSVTNPKLHHHHHLSDFNRNRVSTSLK) constitute a chloroplast transit peptide. In terms of domain architecture, BPL/LPL catalytic spans 81–270 (QECSDSLIIL…EFSEVFQLQM (190 aa)). Substrate contacts are provided by residues 123–130 (RGGEVTYH), 191–193 (AIG), and 204–206 (GLA). Catalysis depends on cysteine 222, which acts as the Acyl-thioester intermediate.

Belongs to the LipB family. As to expression, expressed in roots, leaves, cauline leaves, stems, siliques and flowers.

The protein resides in the plastid. It is found in the chloroplast. It catalyses the reaction octanoyl-[ACP] + L-lysyl-[protein] = N(6)-octanoyl-L-lysyl-[protein] + holo-[ACP] + H(+). Its pathway is protein modification; protein lipoylation via endogenous pathway; protein N(6)-(lipoyl)lysine from octanoyl-[acyl-carrier-protein]: step 1/2. Its function is as follows. Catalyzes the transfer of endogenously produced octanoic acid from octanoyl-acyl-carrier-protein onto the lipoyl domains of lipoate-dependent enzymes. Lipoyl-ACP can also act as a substrate although octanoyl-ACP is likely to be the physiological substrate. Together with LIP1P is essential for de novo plastidial protein lipoylation during seed development. Acts redundantly with LIP2P. This is Octanoyltransferase LIP2p2, chloroplastic from Arabidopsis thaliana (Mouse-ear cress).